Here is a 346-residue protein sequence, read N- to C-terminus: Dihydroorotate dehydrogenase (quinone) (346 aa).

FMN-binding positions include 61–65 and Thr85; that span reads AGLDK. Lys65 is a binding site for substrate. 110–114 provides a ligand contact to substrate; that stretch reads NRMGF. 2 residues coordinate FMN: Asn138 and Asn171. Substrate is bound at residue Asn171. Residue Ser174 is the Nucleophile of the active site. Asn176 contributes to the substrate binding site. 2 residues coordinate FMN: Lys216 and Thr244. A substrate-binding site is contributed by 245-246; it reads NT. FMN is bound by residues Gly267, Gly296, and 317–318; that span reads YS.

It belongs to the dihydroorotate dehydrogenase family. Type 2 subfamily. As to quaternary structure, monomer. FMN is required as a cofactor.

The protein localises to the cell membrane. It carries out the reaction (S)-dihydroorotate + a quinone = orotate + a quinol. The protein operates within pyrimidine metabolism; UMP biosynthesis via de novo pathway; orotate from (S)-dihydroorotate (quinone route): step 1/1. In terms of biological role, catalyzes the conversion of dihydroorotate to orotate with quinone as electron acceptor. The protein is Dihydroorotate dehydrogenase (quinone) of Marinomonas sp. (strain MWYL1).